The chain runs to 482 residues: Pentatricopeptide repeat-containing protein At1g74900, mitochondrial (482 aa).

PPR repeat units follow at residues 90-124 (DASS…RIGP), 125-159 (SPKT…GCFQ), 160-190 (DLAS…LRGR), 194-228 (DTVT…GINP), 229-263 (NLTT…DCEI), 264-298 (DVVT…GVLP), 299-333 (SVAT…GYEP), 334-368 (NVTT…GCEP), 369-403 (NFQT…DCLP), 404-441 (NLDT…GFIP), and 442-476 (RKFT…GSRL).

Belongs to the PPR family. P subfamily.

Its subcellular location is the mitochondrion. In terms of biological role, required for the trans-splicing of intron 1 of the mitochondrial nad1 transcript encoding the ND1 subunit of the mitochondrial membrane respiratory chain NADH dehydrogenase (Complex I). The protein is Pentatricopeptide repeat-containing protein At1g74900, mitochondrial (OTP43) of Arabidopsis thaliana (Mouse-ear cress).